A 274-amino-acid polypeptide reads, in one-letter code: Transcription factor MYB32 (274 aa).

HTH myb-type domains are found at residues 9–61 (KDHT…INYL) and 62–116 (RPDL…KRKL). 2 DNA-binding regions (H-T-H motif) span residues 37-61 (WRSLPRSAGLQRCGKSCRLRWINYL) and 89-112 (WSLIATRLPGRTDNEIKNYWNTHV). The disordered stretch occupies residues 123-144 (PATHRPINETKTSQDSSDSSKT).

Mostly expressed in roots, and, to a lower extent, in stems, flower buds, and siliques.

The protein localises to the nucleus. The chain is Transcription factor MYB32 (MYB32) from Arabidopsis thaliana (Mouse-ear cress).